Reading from the N-terminus, the 518-residue chain is Glutamate--cysteine ligase (518 aa).

It belongs to the glutamate--cysteine ligase type 1 family. Type 1 subfamily.

The enzyme catalyses L-cysteine + L-glutamate + ATP = gamma-L-glutamyl-L-cysteine + ADP + phosphate + H(+). It participates in sulfur metabolism; glutathione biosynthesis; glutathione from L-cysteine and L-glutamate: step 1/2. This is Glutamate--cysteine ligase from Buchnera aphidicola subsp. Acyrthosiphon pisum (strain 5A).